A 265-amino-acid polypeptide reads, in one-letter code: MDTAQKQRWAITLSYDGSRFYGWQKQAGGVPTVQAALETALARIAGESVATTVAGRTDTGVHATAQVVHFDTAAVRPAQAWIRGVNAHLPEGIAVLHARQVAPGFHARFDASGRHYRYLLESAPVRSPLLKNRAGWTHLELDIGPMRRAAALLVGEQDFSSFRAAGCQAKSPVKTIYRADLTQSAGLVRLDLHGNAFLHHMVRNIMGALVYVGSGRLSVEGFAALIQERSRLKAPPTFMPDGLYLTGVDYPGAYGIVRPQIPEWL.

Residue D58 is the Nucleophile of the active site. Y116 provides a ligand contact to substrate.

This sequence belongs to the tRNA pseudouridine synthase TruA family. Homodimer.

The catalysed reaction is uridine(38/39/40) in tRNA = pseudouridine(38/39/40) in tRNA. Its function is as follows. Formation of pseudouridine at positions 38, 39 and 40 in the anticodon stem and loop of transfer RNAs. The sequence is that of tRNA pseudouridine synthase A from Neisseria gonorrhoeae (strain ATCC 700825 / FA 1090).